The chain runs to 494 residues: Guanosine-5'-triphosphate,3'-diphosphate pyrophosphatase (494 aa).

Belongs to the GppA/Ppx family. GppA subfamily.

It carries out the reaction guanosine 3'-diphosphate 5'-triphosphate + H2O = guanosine 3',5'-bis(diphosphate) + phosphate + H(+). Its pathway is purine metabolism; ppGpp biosynthesis; ppGpp from GTP: step 2/2. Catalyzes the conversion of pppGpp to ppGpp. Guanosine pentaphosphate (pppGpp) is a cytoplasmic signaling molecule which together with ppGpp controls the 'stringent response', an adaptive process that allows bacteria to respond to amino acid starvation, resulting in the coordinated regulation of numerous cellular activities. The polypeptide is Guanosine-5'-triphosphate,3'-diphosphate pyrophosphatase (Cronobacter sakazakii (strain ATCC BAA-894) (Enterobacter sakazakii)).